A 160-amino-acid chain; its full sequence is Transmembrane protein 191A (160 aa).

The helical transmembrane segment at 24–44 (FCFPLDFVSNLFWIFASKFII) threads the bilayer.

The protein belongs to the TMEM191 family.

It is found in the membrane. The sequence is that of Transmembrane protein 191A (TMEM191A) from Homo sapiens (Human).